The primary structure comprises 271 residues: Formamidopyrimidine-DNA glycosylase (271 aa).

The active-site Schiff-base intermediate with DNA is the P2. E3 (proton donor) is an active-site residue. K57 serves as the catalytic Proton donor; for beta-elimination activity. Residues H90, R109, and K151 each coordinate DNA. The FPG-type zinc-finger motif lies at 236-270 (HVYGRGSKSCTHCGNLLSEIRLGQRTTVFCGLCQT). R260 acts as the Proton donor; for delta-elimination activity in catalysis.

It belongs to the FPG family. As to quaternary structure, monomer. It depends on Zn(2+) as a cofactor.

The enzyme catalyses Hydrolysis of DNA containing ring-opened 7-methylguanine residues, releasing 2,6-diamino-4-hydroxy-5-(N-methyl)formamidopyrimidine.. It carries out the reaction 2'-deoxyribonucleotide-(2'-deoxyribose 5'-phosphate)-2'-deoxyribonucleotide-DNA = a 3'-end 2'-deoxyribonucleotide-(2,3-dehydro-2,3-deoxyribose 5'-phosphate)-DNA + a 5'-end 5'-phospho-2'-deoxyribonucleoside-DNA + H(+). In terms of biological role, involved in base excision repair of DNA damaged by oxidation or by mutagenic agents. Acts as a DNA glycosylase that recognizes and removes damaged bases. Has a preference for oxidized purines, such as 7,8-dihydro-8-oxoguanine (8-oxoG). Has AP (apurinic/apyrimidinic) lyase activity and introduces nicks in the DNA strand. Cleaves the DNA backbone by beta-delta elimination to generate a single-strand break at the site of the removed base with both 3'- and 5'-phosphates. The sequence is that of Formamidopyrimidine-DNA glycosylase from Shewanella denitrificans (strain OS217 / ATCC BAA-1090 / DSM 15013).